Reading from the N-terminus, the 122-residue chain is Large ribosomal subunit protein bL12 (122 aa).

The protein belongs to the bacterial ribosomal protein bL12 family. As to quaternary structure, homodimer. Part of the ribosomal stalk of the 50S ribosomal subunit. Forms a multimeric L10(L12)X complex, where L10 forms an elongated spine to which 2 to 4 L12 dimers bind in a sequential fashion. Binds GTP-bound translation factors.

In terms of biological role, forms part of the ribosomal stalk which helps the ribosome interact with GTP-bound translation factors. Is thus essential for accurate translation. The protein is Large ribosomal subunit protein bL12 of Shewanella woodyi (strain ATCC 51908 / MS32).